We begin with the raw amino-acid sequence, 832 residues long: Protein P (832 aa).

Residues 1–177 (MPLSYQHFRK…FCGSPYSWEQ (177 aa)) are terminal protein domain (TP). Residues 178 to 335 (ELQHGAESFH…YCLSHLVSLL (158 aa)) are spacer. The tract at residues 336 to 679 (DDWGPCTEHG…YSTLYPVARQ (344 aa)) is polymerase/reverse transcriptase domain (RT). Positions 346–589 (EHHIRIPRTP…YSLHFMGYVI (244 aa)) constitute a Reverse transcriptase domain. Mg(2+)-binding residues include aspartate 418, aspartate 540, and aspartate 541.

The protein belongs to the hepadnaviridae P protein family.

The catalysed reaction is DNA(n) + a 2'-deoxyribonucleoside 5'-triphosphate = DNA(n+1) + diphosphate. The enzyme catalyses Endonucleolytic cleavage to 5'-phosphomonoester.. With respect to regulation, activated by host HSP70 and HSP40 in vitro to be able to bind the epsilon loop of the pgRNA. Because deletion of the RNase H region renders the protein partly chaperone-independent, the chaperones may be needed indirectly to relieve occlusion of the RNA-binding site by this domain. Inhibited by several reverse-transcriptase inhibitors: Lamivudine, Adefovir and Entecavir. Its function is as follows. Multifunctional enzyme that converts the viral RNA genome into dsDNA in viral cytoplasmic capsids. This enzyme displays a DNA polymerase activity that can copy either DNA or RNA templates, and a ribonuclease H (RNase H) activity that cleaves the RNA strand of RNA-DNA heteroduplexes in a partially processive 3'- to 5'-endonucleasic mode. Neo-synthesized pregenomic RNA (pgRNA) are encapsidated together with the P protein, and reverse-transcribed inside the nucleocapsid. Initiation of reverse-transcription occurs first by binding the epsilon loop on the pgRNA genome, and is initiated by protein priming, thereby the 5'-end of (-)DNA is covalently linked to P protein. Partial (+)DNA is synthesized from the (-)DNA template and generates the relaxed circular DNA (RC-DNA) genome. After budding and infection, the RC-DNA migrates in the nucleus, and is converted into a plasmid-like covalently closed circular DNA (cccDNA). The activity of P protein does not seem to be necessary for cccDNA generation, and is presumably released from (+)DNA by host nuclear DNA repair machinery. This Pan troglodytes (Chimpanzee) protein is Protein P.